The following is a 297-amino-acid chain: MTEAFYTDKSRVRASFDRAAATYDRAAVLQREVCDRMATRLDLIRHAPARVLDAGSGTGYGAGLLRARYPEAQVTELDLAPSMLRASRDKQLPQGRLRRLFARAPALVCADLEQLPLASGSLDMVWSSLALQWLNTPDAVLAEFHRVLRVDGLLMFATLGPDTLKELRQAFAGIDGATHVNQFIDMHDMGDALVRAGFATPVMDVERIVLTYDEVKAVMRDLKAIGAHNATAGRGRGLMGRQAWQRIEAAYDRLRQDGRLPATYEVVYGHAWRPAARPRRKLDDGRDIIEFHPHAPA.

Belongs to the methyltransferase superfamily.

The enzyme catalyses malonyl-[ACP] + S-adenosyl-L-methionine = malonyl-[ACP] methyl ester + S-adenosyl-L-homocysteine. The protein operates within cofactor biosynthesis; biotin biosynthesis. In terms of biological role, converts the free carboxyl group of a malonyl-thioester to its methyl ester by transfer of a methyl group from S-adenosyl-L-methionine (SAM). It allows to synthesize pimeloyl-ACP via the fatty acid synthetic pathway. This Laribacter hongkongensis (strain HLHK9) protein is Malonyl-[acyl-carrier protein] O-methyltransferase.